Here is a 165-residue protein sequence, read N- to C-terminus: uncharacterized protein (165 aa).

Over residues 22-34 (QQANQENMSSRTD) the composition is skewed to polar residues. The disordered stretch occupies residues 22-45 (QQANQENMSSRTDSPIPPFGESEQ).

This is an uncharacterized protein from Homo sapiens (Human).